The chain runs to 334 residues: MIEADRLISAAVINDEESIDRAIRPKLLTEYVGQPHVREQMEIFIQAAKQRGDALDHVLIFGPPGLGKTTLANIIANEMGVNLRTTSGPVLEKAGDLAAMLTNLEPHDVLFIDEIHRLSPVVEEILYPAMEDYQLDIMIGEGPAARSIKLDLPPFTLIGATTRAGSLTSPLRDRFGIVQRLEFYPVADLEHIVSRSAKCLGLELTPEGAHQLARRSRGTPRITNRLLRRVRDFAEVRADGAINGEVAMKALDMLNVDAEGFDFMDRKLLLAVIDKFMGGPVGLDNLAAAIGEERETIEDVLEPYLIQQGFIQRTPRGRIATNHAYKHFGITREE.

A large ATPase domain (RuvB-L) region spans residues 4–184 (ADRLISAAVI…FGIVQRLEFY (181 aa)). ATP-binding positions include Ile-23, Arg-24, Gly-65, Lys-68, Thr-69, Thr-70, 131–133 (EDY), Arg-174, Tyr-184, and Arg-221. Thr-69 lines the Mg(2+) pocket. The small ATPAse domain (RuvB-S) stretch occupies residues 185–255 (PVADLEHIVS…VAMKALDMLN (71 aa)). Residues 258–334 (AEGFDFMDRK…YKHFGITREE (77 aa)) form a head domain (RuvB-H) region. DNA-binding residues include Arg-294, Arg-313, and Arg-318.

Belongs to the RuvB family. In terms of assembly, homohexamer. Forms an RuvA(8)-RuvB(12)-Holliday junction (HJ) complex. HJ DNA is sandwiched between 2 RuvA tetramers; dsDNA enters through RuvA and exits via RuvB. An RuvB hexamer assembles on each DNA strand where it exits the tetramer. Each RuvB hexamer is contacted by two RuvA subunits (via domain III) on 2 adjacent RuvB subunits; this complex drives branch migration. In the full resolvosome a probable DNA-RuvA(4)-RuvB(12)-RuvC(2) complex forms which resolves the HJ.

It localises to the cytoplasm. It catalyses the reaction ATP + H2O = ADP + phosphate + H(+). Its function is as follows. The RuvA-RuvB-RuvC complex processes Holliday junction (HJ) DNA during genetic recombination and DNA repair, while the RuvA-RuvB complex plays an important role in the rescue of blocked DNA replication forks via replication fork reversal (RFR). RuvA specifically binds to HJ cruciform DNA, conferring on it an open structure. The RuvB hexamer acts as an ATP-dependent pump, pulling dsDNA into and through the RuvAB complex. RuvB forms 2 homohexamers on either side of HJ DNA bound by 1 or 2 RuvA tetramers; 4 subunits per hexamer contact DNA at a time. Coordinated motions by a converter formed by DNA-disengaged RuvB subunits stimulates ATP hydrolysis and nucleotide exchange. Immobilization of the converter enables RuvB to convert the ATP-contained energy into a lever motion, pulling 2 nucleotides of DNA out of the RuvA tetramer per ATP hydrolyzed, thus driving DNA branch migration. The RuvB motors rotate together with the DNA substrate, which together with the progressing nucleotide cycle form the mechanistic basis for DNA recombination by continuous HJ branch migration. Branch migration allows RuvC to scan DNA until it finds its consensus sequence, where it cleaves and resolves cruciform DNA. The polypeptide is Holliday junction branch migration complex subunit RuvB (Yersinia pestis bv. Antiqua (strain Angola)).